Here is a 131-residue protein sequence, read N- to C-terminus: MVRKRALGLAGSALTLVLGAVGFTAPAQAAPSCPAGSLCTYSGTGLSGARTVIPASDMEKAGTDGVKLPASARSFANGTHFTLRYGPARKVTCVRFPCYQYATVGKVAPGAQLRSLPSPGATVTVGQDLGD.

The first 29 residues, 1-29, serve as a signal peptide directing secretion; sequence MVRKRALGLAGSALTLVLGAVGFTAPAQA. Disulfide bonds link Cys33–Cys39 and Cys93–Cys98.

Inhibits microbial metallo-proteinases, such as thermolysin, but not serine, thiol, or carboxyl proteinases. The polypeptide is Metalloproteinase inhibitor (smpI) (Streptomyces nigrescens).